The following is a 1772-amino-acid chain: Putative stereocilin-like protein (1772 aa).

A signal peptide spans 1 to 25; it reads MALSLWPLLLLLLLLLLLSFAVTLA. N-linked (GlcNAc...) asparagine glycans are attached at residues asparagine 65, asparagine 427, asparagine 476, and asparagine 565.

It belongs to the stereocilin family.

It is found in the secreted. This is Putative stereocilin-like protein (STRCP1) from Homo sapiens (Human).